The following is a 1170-amino-acid chain: DNA excision repair protein ERCC-5 (1170 aa).

The tract at residues Met-1–Gly-78 is N-domain. Lys-8 is modified (N6-acetyllysine). Position 30 (Asp-30) interacts with Mg(2+). The interval Ile-31 to Phe-67 is DNA-binding; may bind to the undamaged single-strand DNA of the DNA repair bubble. Asp-77 is a Mg(2+) binding site. The tract at residues Asp-79–Gln-784 is spacer region. 3 disordered regions span residues Asp-304–Thr-479, His-520–Cys-587, and Leu-600–Leu-701. A compositionally biased stretch (low complexity) spans Glu-306–Ser-323. Composition is skewed to basic and acidic residues over residues Ser-324–Glu-336 and Ser-363–Asn-373. Residue Ser-384 is modified to Phosphoserine. The segment covering Thr-455–Ser-474 has biased composition (polar residues). Positions Thr-539–Asp-551 are enriched in basic and acidic residues. Positions Ser-659–His-676 are enriched in polar residues. A compositionally biased stretch (basic and acidic residues) spans Leu-677–Glu-698. Phosphoserine occurs at positions 704 and 705. Residues Ala-785–Phe-880 form an I-domain region. Positions 788, 790, 809, and 811 each coordinate Mg(2+). The DNA-binding; may bind to the undamaged single-strand DNA of the DNA repair bubble stretch occupies residues His-819–Gln-835. Positions Arg-847–Glu-879 are DNA-binding; H2TH (helix-2turn-helix) motif which binds double-stranded DNA. Residue Asp-860 participates in Mg(2+) binding. Positions Thr-911–Leu-917 are DNA-binding; may bind double-stranded DNA. The interval Leu-980 to Leu-1008 is interaction with PCNA. An interaction with ERCC6/CSB region spans residues Lys-1010–Thr-1170. The disordered stretch occupies residues Leu-1033–Leu-1146. The segment covering Asp-1041–Val-1060 has biased composition (basic and acidic residues). The Nuclear localization signal 1 signature appears at Lys-1049–Arg-1065. Residues Ser-1094–Ser-1110 are compositionally biased toward polar residues. Positions Phe-1153–Thr-1170 match the Nuclear localization signal 2 motif.

The protein belongs to the XPG/RAD2 endonuclease family. XPG subfamily. As to quaternary structure, monomer. Homodimer. Component of the homologous recombination repair (HR) complex composed of ERCC5/XPG, BRCA2, PALB2, DSS1 and RAD51. Within the complex, interacts with BRCA2 and PALB2. Interacts with RNA polymerase II. Interacts (via C-terminus) with ERCC6/CSB; the interaction stimulates ERCC6/CSB binding to the DNA repair bubble and ERCC6/CSB ATPase activity. May form a complex composed of RNA polymerase II, ERCC6/CSB and ERCC5/XPG which associates with the DNA repair bubble during transcription-coupled nucleotide excision repair. Interacts with BRCA1; the interaction promotes the release of BRCA1 from DNA. Interacts with PCNA. Interacts with NTHL1; the interaction stimulates NTHL1 activity and NTHL1 binding to its DNA substrate. Requires Mg(2+) as cofactor.

The protein localises to the nucleus. The protein resides in the chromosome. In terms of biological role, single-stranded structure-specific DNA endonuclease involved in DNA excision repair. Makes the 3'incision in DNA nucleotide excision repair (NER). Binds and bends DNA repair bubble substrate and breaks base stacking at the single-strand/double-strand DNA junction of the DNA bubble. Plays a role in base excision repair (BER) by promoting the binding of DNA glycosylase NTHL1 to its substrate and increasing NTHL1 catalytic activity that removes oxidized pyrimidines from DNA. Involved in transcription-coupled nucleotide excision repair (TCR) which allows RNA polymerase II-blocking lesions to be rapidly removed from the transcribed strand of active genes. Functions during the initial step of TCR in cooperation with ERCC6/CSB to recognized stalled RNA polymerase II. Also, stimulates ERCC6/CSB binding to the DNA repair bubble and ERCC6/CSB ATPase activity. Required for DNA replication fork maintenance and preservation of genomic stability. Involved in homologous recombination repair (HRR) induced by DNA replication stress by recruiting RAD51, BRCA2, and PALB2 to the damaged DNA site. During HRR, binds to the replication fork with high specificity and stabilizes it. Also, acts upstream of HRR, to promote the release of BRCA1 from DNA. The sequence is that of DNA excision repair protein ERCC-5 (Ercc5) from Mus musculus (Mouse).